An 864-amino-acid chain; its full sequence is Microtubule-associated protein TORTIFOLIA1 (864 aa).

Residues 1 to 26 form a disordered region; that stretch reads MSTPTTSGSAAKPTRPARSSSLATRS. A compositionally biased stretch (polar residues) spans 17 to 26; it reads ARSSSLATRS. 5 HEAT repeats span residues 76–113, 117–154, 167–204, 208–245, and 248–285; these read ETLP…LHCD, AHLT…IYLK, LAVG…SAAS, TSFQ…VGAI, and QSLE…HSSG. Residues 329-353 are disordered; it reads DGASDDSKLSASEQLGSEKNGEKRS. Position 414 is a phosphoserine (S414). Residues 426–504 are disordered; that stretch reads NDEEESGLDD…QSEGSFTSNR (79 aa). Positions 439–448 are enriched in polar residues; the sequence is MGSSNRLKNT. Residues 449 to 459 are compositionally biased toward basic and acidic residues; sequence QADDKQVKGRF. The span at 489 to 504 shows a compositional bias: polar residues; sequence VSNTDNQSEGSFTSNR. A coiled-coil region spans residues 508-561; that stretch reads SAIQRQLLQLERQQTNLMNMLQEFIGGSHDSMVTLEGRVRGLERIVEDMARDLS. The tract at residues 615 to 670 is disordered; sequence DDWFIPPHAASRNGQAGPRRSPRSEQYENEHMGNGRRGWDNKASGTIRFGEGPSAR. Positions 636-654 are enriched in basic and acidic residues; it reads PRSEQYENEHMGNGRRGWD.

In terms of assembly, interacts with WAV3. Expressed in roots, hypocotyls, stems, flowers, siliques, inflorescences, petioles, cotyledons, and leaves. Particularly present in root tips and shoot meristems.

The protein localises to the cytoplasm. It is found in the cytoskeleton. Functionally, plant-specific microtubule-associated protein (MAP) that regulates the orientation of cortical microtubules and the direction of organ growth. Determines microtubule organization by modulating microtubule severing. The chain is Microtubule-associated protein TORTIFOLIA1 from Arabidopsis thaliana (Mouse-ear cress).